Reading from the N-terminus, the 400-residue chain is Elongation factor Tu (400 aa).

In terms of domain architecture, tr-type G spans 10–209 (KPHVNIGTIG…AVDKYIPTPQ (200 aa)). Residues 19-26 (GHVDHGKT) form a G1 region. GTP is bound at residue 19–26 (GHVDHGKT). A Mg(2+)-binding site is contributed by Thr26. A G2 region spans residues 60–64 (GITIN). The G3 stretch occupies residues 81–84 (DCPG). Residues 81–85 (DCPGH) and 136–139 (NKVD) contribute to the GTP site. The tract at residues 136–139 (NKVD) is G4. A G5 region spans residues 174 to 176 (SAL).

It belongs to the TRAFAC class translation factor GTPase superfamily. Classic translation factor GTPase family. EF-Tu/EF-1A subfamily. Monomer.

The protein resides in the cytoplasm. It catalyses the reaction GTP + H2O = GDP + phosphate + H(+). Functionally, GTP hydrolase that promotes the GTP-dependent binding of aminoacyl-tRNA to the A-site of ribosomes during protein biosynthesis. This is Elongation factor Tu from Caldicellulosiruptor bescii (strain ATCC BAA-1888 / DSM 6725 / KCTC 15123 / Z-1320) (Anaerocellum thermophilum).